A 132-amino-acid polypeptide reads, in one-letter code: Ribosome-binding factor A (132 aa).

It belongs to the RbfA family. Monomer. Binds 30S ribosomal subunits, but not 50S ribosomal subunits or 70S ribosomes.

The protein localises to the cytoplasm. In terms of biological role, one of several proteins that assist in the late maturation steps of the functional core of the 30S ribosomal subunit. Associates with free 30S ribosomal subunits (but not with 30S subunits that are part of 70S ribosomes or polysomes). Required for efficient processing of 16S rRNA. May interact with the 5'-terminal helix region of 16S rRNA. The polypeptide is Ribosome-binding factor A (Burkholderia vietnamiensis (strain G4 / LMG 22486) (Burkholderia cepacia (strain R1808))).